Reading from the N-terminus, the 343-residue chain is GTP 3',8-cyclase (343 aa).

The Radical SAM core domain maps to 19-244; that stretch reads PFGRNISYLR…TDLDDSTGGP (226 aa). Residue Arg-28 coordinates GTP. Positions 35 and 39 each coordinate [4Fe-4S] cluster. Tyr-41 contacts S-adenosyl-L-methionine. Residue Cys-42 participates in [4Fe-4S] cluster binding. Arg-77 serves as a coordination point for GTP. Gly-81 contributes to the S-adenosyl-L-methionine binding site. Thr-111 provides a ligand contact to GTP. Ser-135 contributes to the S-adenosyl-L-methionine binding site. Position 171 (Lys-171) interacts with GTP. Met-205 serves as a coordination point for S-adenosyl-L-methionine. [4Fe-4S] cluster contacts are provided by Cys-268 and Cys-271. 273 to 275 contacts GTP; it reads RVR. Cys-285 is a binding site for [4Fe-4S] cluster.

It belongs to the radical SAM superfamily. MoaA family. In terms of assembly, monomer and homodimer. It depends on [4Fe-4S] cluster as a cofactor.

It catalyses the reaction GTP + AH2 + S-adenosyl-L-methionine = (8S)-3',8-cyclo-7,8-dihydroguanosine 5'-triphosphate + 5'-deoxyadenosine + L-methionine + A + H(+). It functions in the pathway cofactor biosynthesis; molybdopterin biosynthesis. Catalyzes the cyclization of GTP to (8S)-3',8-cyclo-7,8-dihydroguanosine 5'-triphosphate. In Nitrobacter winogradskyi (strain ATCC 25391 / DSM 10237 / CIP 104748 / NCIMB 11846 / Nb-255), this protein is GTP 3',8-cyclase.